We begin with the raw amino-acid sequence, 84 residues long: GTP cyclohydrolase 1 feedback regulatory protein (84 aa).

This sequence belongs to the GFRP family. As to quaternary structure, homopentamer. Forms a complex with GCH1 where a GCH1 homodecamer is sandwiched by two GFRP homopentamers.

It is found in the nucleus. Its subcellular location is the nucleus membrane. The protein resides in the cytoplasm. It localises to the cytosol. Functionally, mediates tetrahydrobiopterin inhibition of GTP cyclohydrolase 1. The chain is GTP cyclohydrolase 1 feedback regulatory protein (gchfr) from Xenopus laevis (African clawed frog).